Consider the following 181-residue polypeptide: Regulator of G-protein signaling 10 (181 aa).

The tract at residues 1 to 35 (MFTRAVSRLSRKRPPSDIHDGDGSSSSGHQSLKST) is disordered. A phosphoserine mark is found at Ser-24 and Ser-41. The RGS domain maps to 41–156 (SLENLLEDPE…LKSDLFLKHR (116 aa)). Residue Cys-74 is the site of S-palmitoyl cysteine attachment. A disordered region spans residues 157–181 (RTEEEEEDPPDAQTAAKRASRIYNT). The residue at position 176 (Ser-176) is a Phosphoserine.

As to quaternary structure, interacts with GNAZ, GNAI1 and GNAI3. Associates specifically with the activated, GTP-bound forms of GNAZ and GNAI3.

The protein localises to the cytoplasm. It is found in the cytosol. It localises to the nucleus. Functionally, regulates G protein-coupled receptor signaling cascades, including signaling downstream of the muscarinic acetylcholine receptor CHRM2. Inhibits signal transduction by increasing the GTPase activity of G protein alpha subunits, thereby driving them into their inactive GDP-bound form. Modulates the activity of potassium channels that are activated in response to CHRM2 signaling. Activity on GNAZ is inhibited by palmitoylation of the G-protein. In Rattus norvegicus (Rat), this protein is Regulator of G-protein signaling 10 (Rgs10).